The primary structure comprises 431 residues: Protein translocase subunit SecY 1 (431 aa).

The next 10 membrane-spanning stretches (helical) occupy residues 18 to 38 (IYFT…TVPG), 67 to 87 (YSIF…IQLL), 115 to 135 (YLTL…FNAL), 150 to 170 (VEIA…GDEI), 178 to 198 (GVSV…LYQI), 215 to 235 (ILFF…VTWV), 268 to 288 (VIPV…LMAF), 312 to 332 (GVII…FVQV), 365 to 385 (LIKL…LPQL), and 392 to 412 (LPSS…VVLE).

Belongs to the SecY/SEC61-alpha family. Component of the Sec protein translocase complex. Heterotrimer consisting of SecY, SecE and SecG subunits. The heterotrimers can form oligomers, although 1 heterotrimer is thought to be able to translocate proteins. Interacts with the ribosome. Interacts with SecDF, and other proteins may be involved. Interacts with SecA.

Its subcellular location is the cell membrane. In terms of biological role, the central subunit of the protein translocation channel SecYEG. Consists of two halves formed by TMs 1-5 and 6-10. These two domains form a lateral gate at the front which open onto the bilayer between TMs 2 and 7, and are clamped together by SecE at the back. The channel is closed by both a pore ring composed of hydrophobic SecY resides and a short helix (helix 2A) on the extracellular side of the membrane which forms a plug. The plug probably moves laterally to allow the channel to open. The ring and the pore may move independently. The polypeptide is Protein translocase subunit SecY 1 (Lactobacillus kefiranofaciens subsp. kefiranofaciens).